A 381-amino-acid chain; its full sequence is MALKAEGAALDCFEVTLKCEEGEDEEEAMVVAVIPRPEPMLRVTQQEKTPPPRPSPLEAGSDGCEEPKQQVSWEQEFLVGSSPGGSGRALCMVCGAEIRAPSADTARSHILEQHPHTLDLSPSEKSNILEAWSEGVALLQDVRAEQPSPPNSDSGQDAHPDPDANPDAARMPAEIVVLLDSEDNPSLPKRSRPRGLRPLELPAVPATEPGNKKPRGQRWKEPPGEEPVRKKRGRPMTKNLDPDPEPPSPDSPTETFAAPAEVRHFTDGSFPAGFVLQLFSHTQLRGPDSKDSPKDREVAEGGLPRAESPSPAPPPGLRGTLDLQVIRVRMEEPPAVSLLQDWSRHPQGTKRVGAGDTSDWPTVLSESSTTVAGKPEKGNGV.

Residues 42-73 are disordered; the sequence is RVTQQEKTPPPRPSPLEAGSDGCEEPKQQVSW. A Glycyl lysine isopeptide (Lys-Gly) (interchain with G-Cter in SUMO2) cross-link involves residue lysine 48. Residues serine 121 and serine 148 each carry the phosphoserine modification. Disordered stretches follow at residues 144–264, 283–320, and 339–381; these read AEQP…EVRH, QLRG…LRGT, and LQDW…GNGV. Residues lysine 189 and lysine 220 each participate in a glycyl lysine isopeptide (Lys-Gly) (interchain with G-Cter in SUMO2) cross-link. A compositionally biased stretch (basic and acidic residues) spans 218–228; that stretch reads RWKEPPGEEPV. Phosphoserine occurs at positions 248 and 251. Positions 287–299 are enriched in basic and acidic residues; it reads PDSKDSPKDREVA. Residues lysine 290 and lysine 294 each participate in a glycyl lysine isopeptide (Lys-Gly) (interchain with G-Cter in SUMO2) cross-link. Residues serine 308 and serine 310 each carry the phosphoserine modification. Residue lysine 374 forms a Glycyl lysine isopeptide (Lys-Gly) (interchain with G-Cter in SUMO2) linkage.

In terms of assembly, interacts with SPIN1, SPIN2A, SPIN2B, SPIN3 and SPIN4. Interacts with TCF7L2 in a SPIN1-dependent manner. Interacts with PARP1; promoting PARP1 ADP-ribosyltransferase activity.

Its subcellular location is the nucleus. It is found in the chromosome. Its function is as follows. Chromatin protein that stabilizes SPIN1 and enhances its association with histone H3 trimethylated at both 'Lys-4' and 'Lys-9' (H3K4me3K9me3). Positively regulates poly-ADP-ribosylation in response to DNA damage; acts by facilitating PARP1 ADP-ribosyltransferase activity. In Homo sapiens (Human), this protein is Spindlin interactor and repressor of chromatin-binding protein.